The chain runs to 741 residues: Fibrinogen alpha chain (741 aa).

Positions 1–18 (MIPVTILCVLLCLNLAWA) are cleaved as a signal peptide. Position 19 is a pyrrolidone carboxylic acid (Gln-19). A coiled-coil region spans residues 67–506 (CCRMQGIIDD…STRRSYNGKD (440 aa)). The segment at 270–307 (VAEARGDSSPSHTGKLITSSHRRESPSLVDKTSSASSV) is disordered. Polar residues predominate over residues 277-288 (SSPSHTGKLITS). An intrachain disulfide couples Cys-310 to Cys-341. Low complexity-rich tracts occupy residues 381–398 (STSS…HVTG) and 435–449 (SASH…SSSS). The segment at 381 to 510 (STSSRHSIGS…SYNGKDCDDI (130 aa)) is disordered. Over residues 450–459 (FNKGGSTFET) the composition is skewed to polar residues. Residues 498 to 739 (TRRSYNGKDC…VVRMKIRPLE (242 aa)) form the Fibrinogen C-terminal domain. Residues Asp-666, Asp-668, Trp-670, and Glu-672 each coordinate Ca(2+). Cys-674 and Cys-687 are joined by a disulfide.

In terms of assembly, heterohexamer; disulfide linked. Contains 2 sets of 3 non-identical chains (alpha, beta and gamma). The 2 heterotrimers are in head to head conformation with the N-termini in a small central domain. Post-translationally, conversion of fibrinogen to fibrin is triggered by thrombin, which cleaves fibrinopeptides A and B from alpha and beta chains, and thus exposes the N-terminal polymerization sites responsible for the formation of the soft clot. The soft clot is converted into the hard clot by factor XIIIA which catalyzes the epsilon-(gamma-glutamyl)lysine cross-linking between gamma chains (stronger) and between alpha chains (weaker) of different monomers. In terms of processing, forms F13A-mediated cross-links between a glutamine and the epsilon-amino group of a lysine residue, forming fibronectin-fibrinogen heteropolymers.

It localises to the secreted. Its function is as follows. Cleaved by the protease thrombin to yield monomers which, together with fibrinogen beta (FGB) and fibrinogen gamma (FGG), polymerize to form an insoluble fibrin matrix. Fibrin has a major function in hemostasis as one of the primary components of blood clots. The sequence is that of Fibrinogen alpha chain (FGA) from Gallus gallus (Chicken).